The primary structure comprises 638 residues: Probable glycerol-3-phosphate dehydrogenase, mitochondrial (638 aa).

100–128 (DLIVIGGGATGTGVALDAQSRGMKVALFE) contacts FAD.

The protein belongs to the FAD-dependent glycerol-3-phosphate dehydrogenase family. FAD serves as cofactor.

The protein localises to the mitochondrion. It catalyses the reaction a quinone + sn-glycerol 3-phosphate = dihydroxyacetone phosphate + a quinol. Its pathway is polyol metabolism; glycerol degradation via glycerol kinase pathway; glycerone phosphate from sn-glycerol 3-phosphate (anaerobic route): step 1/1. In Dictyostelium discoideum (Social amoeba), this protein is Probable glycerol-3-phosphate dehydrogenase, mitochondrial.